A 179-amino-acid chain; its full sequence is Transcription factor 21 (179 aa).

The segment at 20-86 is disordered; sequence CDGIKLDPNK…KQVQRNAANA (67 aa). Residues 34-46 show a composition bias toward polar residues; the sequence is SNDSNEESSTCDN. Residues 50 to 64 are compositionally biased toward basic residues; the sequence is KKGRGTSGKRRKASS. Positions 70–80 are enriched in polar residues; it reads GTINQEGKQVQ. The region spanning 79 to 131 is the bHLH domain; that stretch reads VQRNAANARERARMRVLSKAFSRLKTTLPWVPPDTKLSKLDTLRLASSYIAHL.

Efficient DNA binding requires dimerization with another bHLH protein. At the start of neurulation (stage 13), expressed in the pronephros. At tailbud stage (stage 25-28), expression is high in the anterior-most branchial arch and pronephric glomus. At stage 40, staining persists in the glomus and in the epicardium region of the heart, and at stage 42, expression is higher in the glomus than in the kidney tubule or duct. In adults, expression is highest in the rectum and the spleen, with significant expression in the duodenum, heart, kidney, lungs, pancreas, skin, liver and muscle.

The protein resides in the nucleus. Involved in epithelial-mesenchymal interactions in kidney and lung morphogenesis that include epithelial differentiation and branching morphogenesis. This chain is Transcription factor 21 (tcf21), found in Xenopus laevis (African clawed frog).